We begin with the raw amino-acid sequence, 447 residues long: Chordin-like protein 1 (447 aa).

The signal sequence occupies residues 1–22; the sequence is MDGMKYIISLFFIFVFLEGSKT. 2 VWFC domains span residues 30-95 and 108-174; these read TYCV…PRCP and KSCE…RVCR. N-linked (GlcNAc...) asparagine glycosylation is present at Asn113. Positions 174–176 match the Cell attachment site motif; that stretch reads RGD. Residues 200-224 form a disordered region; that stretch reads SYLRSPYDPPPNRQAGGLPRFPGSR. The region spanning 253–318 is the VWFC 3 domain; the sequence is QVCVSNGKTY…IDGKCCKVCP (66 aa). Residue Asn286 is glycosylated (N-linked (GlcNAc...) asparagine).

Post-translationally, may be glycosylated. Expressed in heart, brain, lung, liver, kidney and testis.

It localises to the secreted. In terms of biological role, seems to antagonize the function of BMP4 by binding to it and preventing its interaction with receptors. Alters the fate commitment of neural stem cells from gliogenesis to neurogenesis. Contributes to neuronal differentiation of neural stem cells in the brain by preventing the adoption of a glial fate. May play a crucial role in dorsoventral axis formation. Antagonizes the function of BMP7 and may thus play an important role in the embryonic bone formation. Shows no inhibitory effect on the inducing activity of BMP2. Plays a role during anterior segment eye development. This Mus musculus (Mouse) protein is Chordin-like protein 1 (Chrdl1).